We begin with the raw amino-acid sequence, 1343 residues long: DNA-directed RNA polymerase subunit beta (1343 aa).

The protein belongs to the RNA polymerase beta chain family. In terms of assembly, the RNAP catalytic core consists of 2 alpha, 1 beta, 1 beta' and 1 omega subunit. When a sigma factor is associated with the core the holoenzyme is formed, which can initiate transcription.

The enzyme catalyses RNA(n) + a ribonucleoside 5'-triphosphate = RNA(n+1) + diphosphate. DNA-dependent RNA polymerase catalyzes the transcription of DNA into RNA using the four ribonucleoside triphosphates as substrates. This chain is DNA-directed RNA polymerase subunit beta, found in Shewanella violacea.